We begin with the raw amino-acid sequence, 346 residues long: Annexin A1 (346 aa).

Phosphoserine; by TRPM7 is present on Ser-5. Gln-19 participates in a covalent cross-link: Isoglutamyl lysine isopeptide (Gln-Lys) (interchain with K-?). Tyr-21 is modified (phosphotyrosine; by EGFR). Phosphoserine is present on residues Ser-34 and Ser-37. Annexin repeat units follow at residues 42–113, 114–185, 197–269, and 273–344; these read FNPS…ALLK, TPAR…SLAK, DLAD…AIVK, and SKPM…ALCG. Lys-58 carries the post-translational modification N6-acetyllysine. Ca(2+) contacts are provided by Gly-59, Val-60, Glu-62, Lys-97, Leu-100, Glu-105, Met-127, Gly-129, Gly-131, Thr-132, and Glu-134. Phosphothreonine is present on Thr-136. Ca(2+)-binding residues include Asp-171, Gly-210, and Arg-213. Residue Lys-214 forms a Glycyl lysine isopeptide (Lys-Gly) (interchain with G-Cter in SUMO1); alternate linkage. Lys-214 participates in a covalent cross-link: Glycyl lysine isopeptide (Lys-Gly) (interchain with G-Cter in SUMO2); alternate. Residues Gly-215, Asp-253, Glu-255, and Met-256 each coordinate Ca(2+). Lys-257 is covalently cross-linked (Glycyl lysine isopeptide (Lys-Gly) (interchain with G-Cter in SUMO1)). Residues Glu-261, Met-286, Gly-288, and Gly-290 each coordinate Ca(2+). Lys-312 carries the post-translational modification N6-acetyllysine. An intrachain disulfide couples Cys-324 to Cys-343. Residues Leu-328, Glu-330, and Thr-331 each contribute to the Ca(2+) site. A Glycyl lysine isopeptide (Lys-Gly) (interchain with G-Cter in SUMO1) cross-link involves residue Lys-332. Glu-336 contacts Ca(2+).

It belongs to the annexin family. In terms of assembly, homodimer; non-covalently linked. Homodimer; linked by transglutamylation. Homodimers linked by transglutamylation are observed in placenta, but not in other tissues. Interacts with S100A11. Heterotetramer, formed by two molecules each of S100A11 and ANXA1. Interacts with DYSF. Interacts with EGFR. Post-translationally, phosphorylated by protein kinase C, EGFR and TRPM7. Phosphorylated in response to EGF treatment. In terms of processing, sumoylated. Proteolytically cleaved by cathepsin CTSG to release the active N-terminal peptide Ac2-26.

The protein localises to the nucleus. It is found in the cytoplasm. The protein resides in the cell projection. It localises to the cilium. Its subcellular location is the basolateral cell membrane. The protein localises to the lateral cell membrane. It is found in the cell membrane. The protein resides in the apical cell membrane. It localises to the membrane. Its subcellular location is the early endosome. The protein localises to the cytoplasmic vesicle membrane. It is found in the endosome membrane. The protein resides in the secreted. It localises to the extracellular space. Its subcellular location is the extracellular exosome. The protein localises to the cytoplasmic vesicle. It is found in the secretory vesicle lumen. The protein resides in the phagocytic cup. Functionally, plays important roles in the innate immune response as effector of glucocorticoid-mediated responses and regulator of the inflammatory process. Has anti-inflammatory activity. Plays a role in glucocorticoid-mediated down-regulation of the early phase of the inflammatory response. Contributes to the adaptive immune response by enhancing signaling cascades that are triggered by T-cell activation, regulates differentiation and proliferation of activated T-cells. Promotes the differentiation of T-cells into Th1 cells and negatively regulates differentiation into Th2 cells. Has no effect on unstimulated T-cells. Negatively regulates hormone exocytosis via activation of the formyl peptide receptors and reorganization of the actin cytoskeleton. Has high affinity for Ca(2+) and can bind up to eight Ca(2+) ions. Displays Ca(2+)-dependent binding to phospholipid membranes. Plays a role in the formation of phagocytic cups and phagosomes. Plays a role in phagocytosis by mediating the Ca(2+)-dependent interaction between phagosomes and the actin cytoskeleton. In terms of biological role, functions at least in part by activating the formyl peptide receptors and downstream signaling cascades. Promotes chemotaxis of granulocytes and monocytes via activation of the formyl peptide receptors. Promotes rearrangement of the actin cytoskeleton, cell polarization and cell migration. Promotes resolution of inflammation and wound healing. Acts via neutrophil N-formyl peptide receptors to enhance the release of CXCL2. The protein is Annexin A1 (ANXA1) of Equus caballus (Horse).